Reading from the N-terminus, the 967-residue chain is Phosphoenolpyruvate carboxylase (967 aa).

The residue at position 11 (S11) is a Phosphoserine. Active-site residues include H172 and K601.

Belongs to the PEPCase type 1 family. Homotetramer. Mg(2+) is required as a cofactor.

It localises to the cytoplasm. The enzyme catalyses oxaloacetate + phosphate = phosphoenolpyruvate + hydrogencarbonate. The protein operates within photosynthesis; C3 acid pathway. With respect to regulation, by light-reversible phosphorylation. In terms of biological role, through the carboxylation of phosphoenolpyruvate (PEP) it forms oxaloacetate, a four-carbon dicarboxylic acid source for the tricarboxylic acid cycle. The sequence is that of Phosphoenolpyruvate carboxylase (PPCA1) from Flaveria pringlei.